The following is a 625-amino-acid chain: MAU2 chromatid cohesion factor homolog (625 aa).

3 TPR repeats span residues F96–N129, G451–E484, and S491–I524. Residues T600–L611 show a composition bias toward polar residues. The interval T600–Y625 is disordered. Residues Q612–Y625 show a composition bias toward low complexity.

It belongs to the SCC4/mau-2 family. In terms of assembly, interacts with Nipped-B to form the cohesin loading complex.

The protein resides in the nucleus. It localises to the nucleoplasm. Functionally, required for association of the cohesin complex with chromatin during interphase. Plays a role in sister chromatid cohesion and normal progression through prometaphase. This chain is MAU2 chromatid cohesion factor homolog, found in Drosophila mojavensis (Fruit fly).